The sequence spans 451 residues: uncharacterized protein (451 aa).

The interval 1–451 is disordered; that stretch reads MSETENKTTT…KKEAAKNKSK (451 aa). Low complexity predominate over residues 9–22; it reads TTETPTTTDSTVTT. Residues 44 to 54 are compositionally biased toward polar residues; that stretch reads VKNQLSNTRTR. Residues 73–99 show a composition bias toward basic and acidic residues; that stretch reads KLIDTKERKEKKEKKEKEPKEPKEPKE. Residues 114–147 show a composition bias toward acidic residues; sequence GDEEEDEEKEEDEEQKEEQSQEEDSEESEEEQNS. Residues 152–162 show a composition bias toward basic residues; sequence KKKKKQAKKVA. 3 stretches are compositionally biased toward basic and acidic residues: residues 163-192, 199-210, and 217-230; these read KKET…EKEA, STEKKEKEEKPK, and KKDQ…KDGD. The segment covering 232-244 has biased composition (low complexity); sequence STTTTATATTTTD. Composition is skewed to basic and acidic residues over residues 284-303 and 311-340; these read TEEK…ETKK and AAAE…DDKP. Residues 341-355 show a composition bias toward low complexity; that stretch reads AATTTTTTAAAATTT. A compositionally biased stretch (basic and acidic residues) spans 356 to 383; that stretch reads EEPKEKITKPAADKKKAPANKKAEKDQS. The span at 393 to 425 shows a compositional bias: low complexity; it reads TTTATTTTTNKDATAPTTTTNKDATAPTTTTTK. The span at 441–451 shows a compositional bias: basic and acidic residues; the sequence is PKKEAAKNKSK.

This is an uncharacterized protein from Dictyostelium discoideum (Social amoeba).